The chain runs to 500 residues: Ent-cassadiene C11-alpha-hydroxylase 1 (500 aa).

A helical transmembrane segment spans residues 4 to 24; sequence SQVWLLWGALSVAVLFYLSTL. Cysteine 442 serves as a coordination point for heme.

The protein belongs to the cytochrome P450 family. Requires heme as cofactor.

The protein resides in the membrane. The catalysed reaction is ent-cassa-12,15-diene + reduced [NADPH--hemoprotein reductase] + O2 = ent-11beta-hydroxycassa-12,15-diene + oxidized [NADPH--hemoprotein reductase] + H2O + H(+). Functionally, enzyme of the diterpenoid metabolism involved in the biosynthesis of antibacterial oryzalides such as phytocassane. Can use ent-cassadiene as substrate, but not C11-alpha-hydroxy-ent-cassadiene, ent-pimaradiene, ent-sandaracopimaradiene, ent-kaurene, ent-isokaurene, syn-pimaradiene, syn-stemarene, syn-stemodene. The sequence is that of Ent-cassadiene C11-alpha-hydroxylase 1 from Oryza sativa subsp. japonica (Rice).